The primary structure comprises 247 residues: Caffeoyl-CoA O-methyltransferase 2 (247 aa).

A substrate-binding site is contributed by K21. S-adenosyl-L-methionine contacts are provided by residues T63, E85, 87 to 88 (GV), S93, D111, and A140. D163 lines the substrate pocket. D163 contacts a divalent metal cation. Residue D165 coordinates S-adenosyl-L-methionine. Residues D189 and N190 each coordinate a divalent metal cation. Residue N194 participates in substrate binding.

Belongs to the class I-like SAM-binding methyltransferase superfamily. Cation-dependent O-methyltransferase family. CCoAMT subfamily. Requires a divalent metal cation as cofactor.

It catalyses the reaction (E)-caffeoyl-CoA + S-adenosyl-L-methionine = (E)-feruloyl-CoA + S-adenosyl-L-homocysteine + H(+). Its pathway is aromatic compound metabolism; phenylpropanoid biosynthesis. In terms of biological role, methylates caffeoyl-CoA to feruloyl-CoA and 5-hydroxyferuloyl-CoA to sinapoyl-CoA. Plays a role in the synthesis of feruloylated polysaccharides. Involved in the reinforcement of the plant cell wall. Also involved in the responding to wounding or pathogen challenge by the increased formation of cell wall-bound ferulic acid polymers. The protein is Caffeoyl-CoA O-methyltransferase 2 (CCOAOMT2) of Populus trichocarpa (Western balsam poplar).